The sequence spans 305 residues: Ribonuclease BN (305 aa).

His64, His66, Asp68, His69, His141, Asp212, and His270 together coordinate Zn(2+). Asp68 functions as the Proton acceptor in the catalytic mechanism.

It belongs to the RNase Z family. RNase BN subfamily. As to quaternary structure, homodimer. Zn(2+) is required as a cofactor.

Zinc phosphodiesterase, which has both exoribonuclease and endoribonuclease activities. In Escherichia coli O17:K52:H18 (strain UMN026 / ExPEC), this protein is Ribonuclease BN.